The chain runs to 279 residues: Urease accessory protein UreD (279 aa).

It belongs to the UreD family. As to quaternary structure, ureD, UreF and UreG form a complex that acts as a GTP-hydrolysis-dependent molecular chaperone, activating the urease apoprotein by helping to assemble the nickel containing metallocenter of UreC. The UreE protein probably delivers the nickel.

It is found in the cytoplasm. Functionally, required for maturation of urease via the functional incorporation of the urease nickel metallocenter. This chain is Urease accessory protein UreD, found in Streptococcus salivarius (strain 57.I).